A 1854-amino-acid polypeptide reads, in one-letter code: PKS-NRPS hybrid synthetase ATPKS (1854 aa).

The interval 24–423 (FDQTQTRYSP…GRADTQIKIR (400 aa)) is adenylation (A) domain. Residues 523 to 598 (IPASTLTQQL…NLAAYLSDQT (76 aa)) form the Carrier 1 domain. Ser558 bears the O-(pantetheine 4'-phosphoryl)serine mark. The Ketosynthase family 3 (KS3) domain occupies 617–1049 (GEDIAVISMA…GTNAHAIIEE (433 aa)). Catalysis depends on for beta-ketoacyl synthase activity residues Cys791, His926, and His967. The interval 1162–1496 (LFSGQGTERA…SLSDLHIRKV (335 aa)) is malonyl-CoA:ACP transacylase (MAT) domain. Residues 1536–1556 (KSSGQPSGQSPSGCPQPTGQI) are disordered. Residues 1537–1555 (SSGQPSGQSPSGCPQPTGQ) are compositionally biased toward low complexity. The Carrier 2 domain occupies 1776 to 1851 (MMLQGLVRGI…SLSDALQKQV (76 aa)). Ser1811 carries the O-(pantetheine 4'-phosphoryl)serine modification.

The protein in the C-terminal section; belongs to the NRP synthetase family.

The protein operates within secondary metabolite biosynthesis. PKS-NRPS hybrid synthetase; part of the gene cluster that mediates the biosynthesis of pyrophen and campyrone B, which represent a class of fungal amino acid-derived alpha-pyrone natural products. The first step of pyrophen biosynthesis is catalyzed by the PKS-NRPS hybrid synthetase ATPKS that uptakes and condensates L-phenylalanine and malonyl-CoA in order to produce desmethyldesacetylpyrophen. Although the A domain does not discriminate between 2 enantiomeric phenylalanines, the downstream KS domain must play a gate keeping role to stereoselectively accept the L-phenylalanyl-S-phosphopantetheine (Ppant)-T domain intermediate for chain elongation. The resulting amino acid derived diketide is off-loaded through lactonization to yield the alpha-pyrone intermediate desmethyldesacetylpyrophen. The cluster-specific O-methyltransferase (OMT) then methylates desmethyldesacetylpyrophen to desacetylpyrophen, which is further acetylated to pyrophen by an endogenous yet unidentified N-acetyltransferase. ATPKS has relaxed substrate specificity to activate and extend branched-chain amino acid L-leucine to produce small amounts of campyrone B. The chain is PKS-NRPS hybrid synthetase ATPKS from Aspergillus niger (strain ATCC 1015 / CBS 113.46 / FGSC A1144 / LSHB Ac4 / NCTC 3858a / NRRL 328 / USDA 3528.7).